The following is a 362-amino-acid chain: Phosphoserine aminotransferase (362 aa).

L-glutamate-binding residues include Ser9 and Arg42. Pyridoxal 5'-phosphate is bound by residues 76–77 (GR), Trp102, Thr153, Asp174, and Gln197. Lys198 is subject to N6-(pyridoxal phosphate)lysine. Residue 239–240 (NT) coordinates pyridoxal 5'-phosphate.

This sequence belongs to the class-V pyridoxal-phosphate-dependent aminotransferase family. SerC subfamily. In terms of assembly, homodimer. Pyridoxal 5'-phosphate serves as cofactor.

It is found in the cytoplasm. The catalysed reaction is O-phospho-L-serine + 2-oxoglutarate = 3-phosphooxypyruvate + L-glutamate. It catalyses the reaction 4-(phosphooxy)-L-threonine + 2-oxoglutarate = (R)-3-hydroxy-2-oxo-4-phosphooxybutanoate + L-glutamate. It functions in the pathway amino-acid biosynthesis; L-serine biosynthesis; L-serine from 3-phospho-D-glycerate: step 2/3. Its pathway is cofactor biosynthesis; pyridoxine 5'-phosphate biosynthesis; pyridoxine 5'-phosphate from D-erythrose 4-phosphate: step 3/5. Its function is as follows. Catalyzes the reversible conversion of 3-phosphohydroxypyruvate to phosphoserine and of 3-hydroxy-2-oxo-4-phosphonooxybutanoate to phosphohydroxythreonine. The sequence is that of Phosphoserine aminotransferase from Klebsiella pneumoniae subsp. pneumoniae (strain ATCC 700721 / MGH 78578).